Consider the following 353-residue polypeptide: Probable D-xylulose reductase A (353 aa).

Residues cysteine 42, histidine 67, and glutamate 68 each contribute to the Zn(2+) site. Glycine 177–glycine 182 is an NAD(+) binding site.

It belongs to the zinc-containing alcohol dehydrogenase family. It depends on Zn(2+) as a cofactor.

It catalyses the reaction xylitol + NAD(+) = D-xylulose + NADH + H(+). The protein operates within carbohydrate degradation; L-arabinose degradation via L-arabinitol; D-xylulose 5-phosphate from L-arabinose (fungal route): step 4/5. Its function is as follows. Xylitol dehydrogenase which catalyzes the conversion of xylitol to D-xylulose. Xylose is a major component of hemicelluloses such as xylan. Most fungi utilize D-xylose via three enzymatic reactions, xylose reductase (XR), xylitol dehydrogenase (XDH), and xylulokinase, to form xylulose 5-phosphate, which enters pentose phosphate pathway. The polypeptide is Probable D-xylulose reductase A (xdhA) (Aspergillus terreus (strain NIH 2624 / FGSC A1156)).